The primary structure comprises 538 residues: Dolichol kinase (538 aa).

Residues 1–13 (MTRECPSPAPGPG) lie on the Lumenal side of the membrane. The helical transmembrane segment at 14–34 (APLSGSVLAEAAVVFAVVLSI) threads the bilayer. Topologically, residues 35 to 74 (HATVWDRYSWCAVALAVQAFYVQYKWDRLLQQGSAVFQFR) are cytoplasmic. A helical transmembrane segment spans residues 75 to 95 (MSANSGLLPASMVMPLLGLVM). Topologically, residues 96 to 111 (KERCQTAGNPFFERFG) are lumenal. A helical transmembrane segment spans residues 112–132 (IVVAATGMAVALFSSVLALGI). Topologically, residues 133-134 (TR) are cytoplasmic. The chain crosses the membrane as a helical span at residues 135-155 (PVPTNTCVILGLAGGVIIYIM). Residues 156–163 (KHSLSVGE) lie on the Lumenal side of the membrane. A helical transmembrane segment spans residues 164-184 (VIEVLEVLLIFVYLNMILLYL). Residues 185 to 188 (LPRC) are Cytoplasmic-facing. A helical membrane pass occupies residues 189-209 (FTPGEALLVLGGISFVLNQLI). Topologically, residues 210–224 (KRSLTLVESQGDPVD) are lumenal. Residues 225-245 (FFLLVVVVGMVLMGIFFSTLF) form a helical membrane-spanning segment. Topologically, residues 246–254 (VFMDSGTWA) are cytoplasmic. A helical membrane pass occupies residues 255 to 275 (SSIFFHLMTCVLSLGVVLPWL). Residues 276-297 (HRLIRRNPLLWLLQFLFQTDTR) are Lumenal-facing. The helical transmembrane segment at 298–318 (IYLLAYWSLLATLACLVVLYQ) threads the bilayer. Topologically, residues 319–337 (NAKRSSSESKKHQAPTIAR) are cytoplasmic. The helical transmembrane segment at 338-354 (KYFHLIVVATYIPGIIF) threads the bilayer. Residues 355 to 359 (DRPLL) lie on the Lumenal side of the membrane. The helical transmembrane segment at 360–380 (YVAATVCLAVFIFLEYVRYFR) threads the bilayer. The Cytoplasmic portion of the chain corresponds to 381 to 401 (IKPLGHTLRSFLSLFLDERDS). Residues 402–422 (GPLILTHIYLLLGMSLPIWLI) traverse the membrane as a helical segment. The Lumenal portion of the chain corresponds to 423–436 (PRPCTQKGSLGGAR). A helical transmembrane segment spans residues 437–457 (ALVPYAGVLAVGVGDTVASIF). At 458–472 (GSTMGEIRWPGTKKT) the chain is on the cytoplasmic side. The tract at residues 459 to 474 (STMGEIRWPGTKKTFE) is CTP-binding. A helical transmembrane segment spans residues 473-493 (FEGTMTSIFAQIISVALILIF). Topologically, residues 494-495 (DS) are lumenal. The helical transmembrane segment at 496–516 (GVDLNYSYAWILGSISTVSLL) threads the bilayer. The Cytoplasmic portion of the chain corresponds to 517-538 (EAYTTQIDNLLLPLYLLILLMA).

Belongs to the polyprenol kinase family. Ubiquitous.

The protein resides in the endoplasmic reticulum membrane. The catalysed reaction is a di-trans,poly-cis-dolichol + CTP = a di-trans,poly-cis-dolichyl phosphate + CDP + H(+). It functions in the pathway protein modification; protein glycosylation. Its function is as follows. Catalyzes CTP-mediated phosphorylation of dolichol, the terminal step in de novo dolichyl monophosphate (Dol-P) biosynthesis. Dol-P is a lipid carrier essential for the synthesis of N-linked and O-linked oligosaccharides and for GPI anchors. The polypeptide is Dolichol kinase (DOLK) (Homo sapiens (Human)).